We begin with the raw amino-acid sequence, 260 residues long: Flagellar basal-body rod protein FlgG (260 aa).

This sequence belongs to the flagella basal body rod proteins family. The basal body constitutes a major portion of the flagellar organelle and consists of four rings (L,P,S, and M) mounted on a central rod. The rod consists of about 26 subunits of FlgG in the distal portion, and FlgB, FlgC and FlgF are thought to build up the proximal portion of the rod with about 6 subunits each.

It is found in the bacterial flagellum basal body. The chain is Flagellar basal-body rod protein FlgG (flgG) from Salmonella typhi.